The primary structure comprises 133 residues: Bacteriohemerythrin (133 aa).

Fe cation-binding residues include H19, H56, E60, H75, H79, H115, and D120.

This sequence belongs to the hemerythrin family. Monomer.

Oxygen-binding protein. May be involved in a storage mechanism or for delivery to oxygen-requiring enzymes. The oxygen-binding site contains two iron atoms. This Campylobacter jejuni subsp. jejuni serotype O:23/36 (strain 81-176) protein is Bacteriohemerythrin.